A 96-amino-acid chain; its full sequence is UPF0235 protein YPN_3141 (96 aa).

This sequence belongs to the UPF0235 family.

This is UPF0235 protein YPN_3141 from Yersinia pestis bv. Antiqua (strain Nepal516).